A 533-amino-acid chain; its full sequence is 2,3-bisphosphoglycerate-independent phosphoglycerate mutase (533 aa).

Mn(2+) is bound by residues aspartate 15 and serine 65. Residue serine 65 is the Phosphoserine intermediate of the active site. Residues histidine 126, 156 to 157 (RD), arginine 188, arginine 194, 258 to 261 (RPDR), and lysine 331 each bind substrate. 5 residues coordinate Mn(2+): aspartate 398, histidine 402, aspartate 439, histidine 440, and histidine 457.

The protein belongs to the BPG-independent phosphoglycerate mutase family. In terms of assembly, monomer. Requires Mn(2+) as cofactor.

The catalysed reaction is (2R)-2-phosphoglycerate = (2R)-3-phosphoglycerate. Its pathway is carbohydrate degradation; glycolysis; pyruvate from D-glyceraldehyde 3-phosphate: step 3/5. Catalyzes the interconversion of 2-phosphoglycerate and 3-phosphoglycerate. In Nostoc sp. (strain PCC 7120 / SAG 25.82 / UTEX 2576), this protein is 2,3-bisphosphoglycerate-independent phosphoglycerate mutase.